We begin with the raw amino-acid sequence, 457 residues long: L-asparaginase-like protein GL17509 (457 aa).

A signal peptide spans 1–20 (MRYLCRAQLLSLLLLPLLKA). Disulfide bonds link Cys72–Cys78, Cys172–Cys188, and Cys327–Cys354.

Belongs to the Ntn-hydrolase family.

The polypeptide is L-asparaginase-like protein GL17509 (Drosophila persimilis (Fruit fly)).